A 191-amino-acid polypeptide reads, in one-letter code: MSKLILILTAQILLLTATALAGKNGEDFARTINRKHLGLGKKEKLTHLRVYWHDIVTGRNPSSIRIQGPVAKYSSSSYFGSITMIDNALTLDVPINSTVVGQAQGMYVGAAQKEIGLLMAMNLAFKTGKYNGSTITILGRNTVMSKVREMPVVGGSGMFRFARGYVEARTKLFDMKTGDATVESNCYILHY.

The first 21 residues, 1 to 21 (MSKLILILTAQILLLTATALA), serve as a signal peptide directing secretion. N-linked (GlcNAc...) asparagine glycosylation is found at N96 and N131.

This sequence belongs to the plant dirigent protein family. As to quaternary structure, homodimer.

The protein localises to the secreted. Its subcellular location is the extracellular space. It is found in the apoplast. Its function is as follows. Dirigent proteins impart stereoselectivity on the phenoxy radical-coupling reaction, yielding optically active lignans from two molecules of coniferyl alcohol in the biosynthesis of lignans, flavonolignans, and alkaloids and thus plays a central role in plant secondary metabolism. The polypeptide is Dirigent protein 3 (DIR3) (Arabidopsis thaliana (Mouse-ear cress)).